The primary structure comprises 423 residues: MASIWEETEADGLGEEVLKMSTEEIIQRTRLLDSEIKIMKSEVLRVTHELQAMRDKIKENSEKIKVNKTLPYLVSNVIELLDVDPNDQEEDGANIDLDSQRKGKCAVIKTSTRQTYFLPVIGLVDAEKLKPGDLVGVNKDSYLILETLPTEYDSRVKAMEVDERPTEQYSDIGGLDKQIQELVEAIVLPMNHKEKFENLGIQPPKGVLMYGPPGTGKTLLARACAAQTKATFLKLAGPQLVQMFIGDGAKLVRDAFALAKEKAPSIIFIDELDAIGTKRFDSEKAGDREVQRTMLELLNQLDGFQPNMQVKVIAATNRVDILDPALLRSGRLDRKIEFPMPNEEARARIMQIHSRKMNVSPDVNYEELARCTDDFNGAQCKAVCVEAGMIALRRGATELTHEDYMEGILEVQAKKKANLQYYA.

211–218 lines the ATP pocket; sequence GPPGTGKT.

It belongs to the AAA ATPase family. As to quaternary structure, may form a heterodimer with a related family member.

The protein localises to the cytoplasm. Its subcellular location is the nucleus. Functionally, the 26S proteasome is involved in the ATP-dependent degradation of ubiquitinated proteins. The regulatory (or ATPase) complex confers ATP dependency and substrate specificity to the 26S complex. This Xenopus laevis (African clawed frog) protein is 26S proteasome regulatory subunit 6A-A.